The sequence spans 173 residues: Peptidyl-prolyl cis-trans isomerase cyp3 (173 aa).

The 165-residue stretch at 8–172 (FMDIAIDGRL…SNVAIVECGE (165 aa)) folds into the PPIase cyclophilin-type domain.

It belongs to the cyclophilin-type PPIase family. PPIase H subfamily.

The protein resides in the cytoplasm. It is found in the cytoskeleton. Its subcellular location is the microtubule organizing center. The protein localises to the spindle pole body. It catalyses the reaction [protein]-peptidylproline (omega=180) = [protein]-peptidylproline (omega=0). Functionally, PPIases accelerate the folding of proteins. It catalyzes the cis-trans isomerization of proline imidic peptide bonds in oligopeptides. This Schizosaccharomyces pombe (strain 972 / ATCC 24843) (Fission yeast) protein is Peptidyl-prolyl cis-trans isomerase cyp3 (cyp3).